The chain runs to 40 residues: Snaclec tokaracetin subunit alpha (40 aa).

The region spanning 1-40 is the C-type lectin domain; sequence DCPSGWSSFKQYCYKPFKQLKTWEDAERFCLEQVKGAHLV. A disulfide bridge links cysteine 2 with cysteine 13.

This sequence belongs to the snaclec family. Heterodimer of subunits alpha and beta; disulfide-linked. In terms of tissue distribution, expressed by the venom gland.

The protein localises to the secreted. Functionally, platelet antagonist that specifically and reversibly binds to a site on platelet glycoprotein Ibalpha (GP1BA) close to or identical with the site for vWF binding. It inhibits the binding of vWF to platelets and vWF-dependent shear-induced platelet aggregation. In Protobothrops tokarensis (Tokara habu), this protein is Snaclec tokaracetin subunit alpha.